Here is a 147-residue protein sequence, read N- to C-terminus: Probable disulfide formation protein (147 aa).

A helical transmembrane segment spans residues 9–28; it reads NYSLYFAWLTALIATLGSLY. A disulfide bridge connects residues Cys-38 and Cys-41. 2 helical membrane-spanning segments follow: residues 43–62 and 69–86; these read YQRV…AYRT and YALP…YQYL. An intrachain disulfide couples Cys-99 to Cys-106. Residues 115–138 traverse the membrane as a helical segment; it reads GFITLPFLGMLATLIMSFFLIMAF.

The protein belongs to the DsbB family. BdbC subfamily.

Its subcellular location is the cell inner membrane. In terms of biological role, required for disulfide bond formation in some proteins. The protein is Probable disulfide formation protein of Coxiella burnetii (strain CbuK_Q154) (Coxiella burnetii (strain Q154)).